We begin with the raw amino-acid sequence, 130 residues long: Early E3B 14.5 kDa protein (130 aa).

A signal peptide spans 1-19 (MKRIVTFVLLIFCALPVLC). A helical membrane pass occupies residues 53–77 (AWLYAIISVMVFCSTIFALAIYPYL).

This sequence belongs to the adenoviridae E3_14 family. In terms of processing, phosphorylated on serine; O-glycosylated, but not N-glycosylated.

The protein resides in the host membrane. Down-regulates the EGF receptor and prevents cytolysis by TNF. The polypeptide is Early E3B 14.5 kDa protein (Human adenovirus C serotype 6 (HAdV-6)).